The chain runs to 939 residues: Zinc finger RNA-binding protein 2 (939 aa).

Disordered regions lie at residues 1-72, 116-185, 217-264, 289-314, 360-389, 401-449, 545-590, and 906-939; these read MATS…AYGS, GRMT…IVTS, FYPP…PKAG, HLGG…SPRG, LEPA…ASSR, ALCE…DAQP, RLEE…SSDD, and RLGA…EGLV. Polar residues-rich tracts occupy residues 137–147 and 157–184; these read PHGSHSHAQPP and QPAS…SIVT. Residues 217 to 239 are compositionally biased toward pro residues; the sequence is FYPPAQPPPPPGPPQQLPPPPAP. Residues 516–549 adopt a coiled-coil conformation; sequence KVLEERMRKQRHLAEERLEQLRRWHAERRRLEEE. Positions 570-935 constitute a DZF domain; that stretch reads RPESPASAPL…GEKKRGRRGG (366 aa). Positions 906–916 are enriched in basic residues; the sequence is RLGARFRKRQR.

This chain is Zinc finger RNA-binding protein 2 (ZFR2), found in Homo sapiens (Human).